The primary structure comprises 98 residues: MANIQFRPLHDRVVVRRVESENKTAGGIIIPDTAKEKPQEGEIIAVGNGALDDNGKRVPLEVKTGDRILFGKWSGTEVKINGEDLLIMKESDIMGILG.

Belongs to the GroES chaperonin family. In terms of assembly, heptamer of 7 subunits arranged in a ring. Interacts with the chaperonin GroEL.

It localises to the cytoplasm. Its function is as follows. Together with the chaperonin GroEL, plays an essential role in assisting protein folding. The GroEL-GroES system forms a nano-cage that allows encapsulation of the non-native substrate proteins and provides a physical environment optimized to promote and accelerate protein folding. GroES binds to the apical surface of the GroEL ring, thereby capping the opening of the GroEL channel. The protein is Co-chaperonin GroES of Bartonella quintana (strain Toulouse) (Rochalimaea quintana).